The following is a 287-amino-acid chain: MKLRIKAYAKVNLTLDVLSKREDGYHEILSVMQSIDLADVIEFEKAKEILFECDHERVPKGEENLIMKAFNAIRDRYFLNEGIKIKLFKNIPLAAGLAGGSADAAATIVALDKLWNLNLTEKEMEEIASEVGSDVPFCLKGGTKLASGRGEKLQDLEGIPLNLLLVKPDLEISTKEVYTEWDNSGFKSLNSTFLFVEALKKGDLLEIARNISNDLERVTSQKYRVIEDIKKSLIEKGALSASMTGSGPTVYGVFNDVEKLVRAYHDLKGVYPFVAISKTIDKGLEIL.

The active site involves Lys10. Position 92–102 (Pro92–Ala102) interacts with ATP. Asp134 is a catalytic residue.

The protein belongs to the GHMP kinase family. IspE subfamily.

The enzyme catalyses 4-CDP-2-C-methyl-D-erythritol + ATP = 4-CDP-2-C-methyl-D-erythritol 2-phosphate + ADP + H(+). It functions in the pathway isoprenoid biosynthesis; isopentenyl diphosphate biosynthesis via DXP pathway; isopentenyl diphosphate from 1-deoxy-D-xylulose 5-phosphate: step 3/6. Its function is as follows. Catalyzes the phosphorylation of the position 2 hydroxy group of 4-diphosphocytidyl-2C-methyl-D-erythritol. The sequence is that of 4-diphosphocytidyl-2-C-methyl-D-erythritol kinase from Caldanaerobacter subterraneus subsp. tengcongensis (strain DSM 15242 / JCM 11007 / NBRC 100824 / MB4) (Thermoanaerobacter tengcongensis).